Reading from the N-terminus, the 548-residue chain is Nonribosomal peptide synthetase 8 (548 aa).

The region spanning 1–77 (MNSLDQWRDT…QLRGENRSGP (77 aa)) is the Carrier domain. Residue Ser35 is modified to O-(pantetheine 4'-phosphoryl)serine. A condensation region spans residues 122-537 (MAPISSIQEF…FKSLIAELAA (416 aa)).

It belongs to the NRP synthetase family.

It functions in the pathway mycotoxin biosynthesis. Nonribosomal peptide synthetase; part of the gene cluster that mediates the biosynthesis of fumonisins B1 (FB1), B2 (FB2), B3 (FB3), and B4 (FB4), which are carcinogenic mycotoxins. Within the pathway FUM14 catalyzes esterification of CoA-activated tricarballylic acid to the C-14 and C-15 hydroxyls of the fumonisin backbone. The biosynthesis starts with the FUM1-catalyzed carbon chain assembly from one molecule of acetyl-CoA, eight molecules of malonyl-CoA, and two molecules of methionine (in S-adenosyl form). The C18 polyketide chain is released from the enzyme by a nucleophilic attack of a carbanion, which is derived from R-carbon of alanine by decarboxylation, on the carbonyl carbon of polyketide acyl chain. This step is catalyzed by the pyridoxal 5'-phosphate-dependent aminoacyl transferase FUM8. The resultant 3-keto intermediate is then stereospecifically reduced to a 3-hydroxyl product by reductase FUM13. Subsequent oxidations at C-10 by the cytochrome P450 monooxygenase FUM2, C-14 and C-15 by FUM6, FUM12 or FUM15, tricarballylic esterification of the hydroxyl groups on C-14 and C-15 by acyltransferase FUM14, and C-5 hydroxylation by 2-keto-glutarate-dependent dioxygenase FUM3 furnish the biosynthesis of fumonisins. The tricarballylic moieties are most likely derived from the citric acid cycle, and their addition to the carbon backbone may involve FUM7, FUM10, FUM11 and FUM14. This is Nonribosomal peptide synthetase 8 from Gibberella moniliformis (strain M3125 / FGSC 7600) (Maize ear and stalk rot fungus).